Consider the following 215-residue polypeptide: tRNA (guanine-N(7)-)-methyltransferase (215 aa).

Positions 44, 69, 96, and 118 each coordinate S-adenosyl-L-methionine. Asp-118 is a catalytic residue. Lys-122 is a substrate binding site. Residues 124 to 129 are interaction with RNA; sequence RHEKRR. Residues Asp-154 and 192 to 195 contribute to the substrate site; that span reads TEYE.

Belongs to the class I-like SAM-binding methyltransferase superfamily. TrmB family.

It catalyses the reaction guanosine(46) in tRNA + S-adenosyl-L-methionine = N(7)-methylguanosine(46) in tRNA + S-adenosyl-L-homocysteine. Its pathway is tRNA modification; N(7)-methylguanine-tRNA biosynthesis. Its function is as follows. Catalyzes the formation of N(7)-methylguanine at position 46 (m7G46) in tRNA. The protein is tRNA (guanine-N(7)-)-methyltransferase of Limosilactobacillus fermentum (strain NBRC 3956 / LMG 18251) (Lactobacillus fermentum).